A 45-amino-acid chain; its full sequence is Pollen allergen Amb a 5 (45 aa).

4 disulfides stabilise this stretch: Cys4–Cys39, Cys11–Cys26, Cys18–Cys32, and Cys19–Cys43.

In terms of assembly, monomer.

In Ambrosia artemisiifolia var. elatior (Short ragweed), this protein is Pollen allergen Amb a 5.